We begin with the raw amino-acid sequence, 450 residues long: tRNA modification GTPase MnmE (450 aa).

(6S)-5-formyl-5,6,7,8-tetrahydrofolate contacts are provided by R20, E78, and K117. In terms of domain architecture, TrmE-type G spans 211–372 (GLRMVIVGKP…LEESIYRETQ (162 aa)). N221 is a binding site for K(+). GTP is bound by residues 221 to 226 (NVGKST), 240 to 246 (TDIPGTT), and 265 to 268 (DTAG). Mg(2+) is bound at residue S225. K(+) is bound by residues T240, I242, and T245. A Mg(2+)-binding site is contributed by T246. K450 contributes to the (6S)-5-formyl-5,6,7,8-tetrahydrofolate binding site.

The protein belongs to the TRAFAC class TrmE-Era-EngA-EngB-Septin-like GTPase superfamily. TrmE GTPase family. Homodimer. Heterotetramer of two MnmE and two MnmG subunits. It depends on K(+) as a cofactor.

It localises to the cytoplasm. Its function is as follows. Exhibits a very high intrinsic GTPase hydrolysis rate. Involved in the addition of a carboxymethylaminomethyl (cmnm) group at the wobble position (U34) of certain tRNAs, forming tRNA-cmnm(5)s(2)U34. The protein is tRNA modification GTPase MnmE of Thermotoga sp. (strain RQ2).